Reading from the N-terminus, the 268-residue chain is Cytolethal distending toxin subunit A (268 aa).

An N-terminal signal peptide occupies residues 1–19; it reads MQKIIVFILCCFMTFFLYA. A lipid anchor (N-palmitoyl cysteine) is attached at Cys20. Cys20 carries the S-diacylglycerol cysteine lipid modification. Residues 112–252 enclose the Ricin B-type lectin domain; the sequence is VSDFLTILGP…DNFDQQWFLT (141 aa). The interval 129–140 is mediates binding to target cells; it reads WALAQGNWIWGY.

As to quaternary structure, heterotrimer of 3 subunits, CdtA, CdtB and CdtC.

It localises to the cell outer membrane. Functionally, CDTs are cytotoxins which induce cell distension, growth arrest in G2/M phase, nucleus swelling, and chromatin fragmentation in HeLa cells. This Campylobacter jejuni subsp. jejuni serotype O:2 (strain ATCC 700819 / NCTC 11168) protein is Cytolethal distending toxin subunit A (cdtA).